The sequence spans 339 residues: Beta-ketoacyl-[acyl-carrier-protein] synthase III (339 aa).

Residues Cys121 and His257 contribute to the active site. Residues 258-262 (QANLR) form an ACP-binding region. Asn288 is an active-site residue.

It belongs to the thiolase-like superfamily. FabH family. As to quaternary structure, homodimer.

It localises to the cytoplasm. The catalysed reaction is malonyl-[ACP] + propanoyl-CoA + H(+) = 3-oxopentanoyl-[ACP] + CO2 + CoA. It carries out the reaction 2-methylpropanoyl-CoA + malonyl-[ACP] + H(+) = 4-methyl-3-oxopentanoyl-[ACP] + CO2 + CoA. The enzyme catalyses malonyl-[ACP] + acetyl-CoA + H(+) = 3-oxobutanoyl-[ACP] + CO2 + CoA. It catalyses the reaction butanoyl-CoA + malonyl-[ACP] + H(+) = 3-oxohexanoyl-[ACP] + CO2 + CoA. Its pathway is lipid metabolism; fatty acid biosynthesis. Catalyzes the condensation reaction of fatty acid synthesis by the addition to an acyl acceptor of two carbons from malonyl-ACP. Catalyzes the first condensation reaction which initiates fatty acid synthesis and may therefore play a role in governing the total rate of fatty acid production. Possesses both acetoacetyl-ACP synthase and acetyl transacylase activities. Propionyl-CoA and isobutyryl-CoA were the two most preferred substrates, although acetyl-CoA and butyryl-CoA could also be accepted and elongated. Involved in the biosynthesis of R1128 polyketide. The sequence is that of Beta-ketoacyl-[acyl-carrier-protein] synthase III from Streptomyces lividans.